The following is a 437-amino-acid chain: Epsilon-sarcoglycan (437 aa).

The Extracellular portion of the chain corresponds to Met1–Phe317. An N-linked (GlcNAc...) asparagine glycan is attached at Asn200. The helical transmembrane segment at Leu318–Ile338 threads the bilayer. The Cytoplasmic portion of the chain corresponds to Met339–Pro437.

The protein belongs to the sarcoglycan alpha/epsilon family. In terms of processing, N-glycosylated. Post-translationally, ubiquitinated, leading to its degradation by the proteasome. Identified in all tissues tested. Expression highest in lung and placenta, moderate in brain, heart and skeletal muscle, low in kidney and liver. Also detected in embryo.

It is found in the cell membrane. The protein localises to the sarcolemma. It localises to the golgi apparatus. Its subcellular location is the cell projection. The protein resides in the dendrite. It is found in the cytoplasm. The protein localises to the cytoskeleton. In terms of biological role, component of the sarcoglycan complex, a subcomplex of the dystrophin-glycoprotein complex which forms a link between the F-actin cytoskeleton and the extracellular matrix. This chain is Epsilon-sarcoglycan (Sgce), found in Mus musculus (Mouse).